The following is a 150-amino-acid chain: Peptide deformylase 2 (150 aa).

Fe cation is bound by residues Cys-89 and His-131. Residue Glu-132 is part of the active site. His-135 is a binding site for Fe cation.

It belongs to the polypeptide deformylase family. The cofactor is Fe(2+).

The catalysed reaction is N-terminal N-formyl-L-methionyl-[peptide] + H2O = N-terminal L-methionyl-[peptide] + formate. Its function is as follows. Removes the formyl group from the N-terminal Met of newly synthesized proteins. Requires at least a dipeptide for an efficient rate of reaction. N-terminal L-methionine is a prerequisite for activity but the enzyme has broad specificity at other positions. In Clostridium acetobutylicum (strain ATCC 824 / DSM 792 / JCM 1419 / IAM 19013 / LMG 5710 / NBRC 13948 / NRRL B-527 / VKM B-1787 / 2291 / W), this protein is Peptide deformylase 2.